Reading from the N-terminus, the 326-residue chain is Putative ABC transporter ATP-binding protein MA_4020 (326 aa).

The segment covering 1-12 (MTISTLSSSYGN) has biased composition (polar residues). Positions 1-34 (MTISTLSSSYGNAQDVPAEDSDRHGSIEPGSEKA) are disordered. In terms of domain architecture, ABC transporter spans 46-281 (LEVKNLCHRY…PELLRKAHLR (236 aa)). 80-87 (GANGAGKS) provides a ligand contact to ATP.

Belongs to the ABC transporter superfamily.

It localises to the cell membrane. Functionally, probably part of an ABC transporter complex. Responsible for energy coupling to the transport system. This is Putative ABC transporter ATP-binding protein MA_4020 from Methanosarcina acetivorans (strain ATCC 35395 / DSM 2834 / JCM 12185 / C2A).